The primary structure comprises 364 residues: FMNH(2)-dependent dimethylsulfone monooxygenase (364 aa).

This sequence belongs to the SsuD family.

It catalyses the reaction dimethyl sulfone + FMNH2 + O2 = methanesulfinate + FMN + formaldehyde + H2O + 2 H(+). Functionally, involved in the dimethyl sulfide degradation pathway. Catalyzes the oxidation of dimethylsulfone (DMSO2) to yield methanesulfinate, which is oxidized spontaneously to methanesulfonate in the presence of dioxygen and FMNH(2). The protein is FMNH(2)-dependent dimethylsulfone monooxygenase of Pseudomonas fluorescens (strain Pf0-1).